The chain runs to 247 residues: MLVLRSGLTKALASRTLAPQVCSSFATGPRQYDGTFYEFRTYYLKPSNMNAFMENLKKNIHLRTSYSELVGFWSVEFGGRTNKVFHIWKYDNFAHRAEVRKALANCKEWQEQSIIPNLARIDKQETEITYLIPWSKLEKPPKEGVYELAVFQMKPGGPALWGDAFERAINAHVNLGYTKVVGVFHTEYGELNRVHVLWWNESADSRAAGRHKSHEDPRVVAAVRESVNYLVSQQNMLLIPASFSPLK.

Residues lysine 45 and lysine 57 each carry the N6-succinyllysine modification.

This sequence belongs to the NipSnap family.

In Homo sapiens (Human), this protein is Protein NipSnap homolog 3B (NIPSNAP3B).